Here is a 113-residue protein sequence, read N- to C-terminus: Non-specific lipid-transfer protein (113 aa).

The N-terminal stretch at 1–24 is a signal peptide; sequence AQVMLMAVALVLMLAAVPRAAVAI. Intrachain disulfides connect C26–C73, C36–C50, C51–C96, and C71–C110. The Cis-14-hydroxy-10,13-dioxo-7-heptadecenoic acid aspartate ester moiety is linked to residue D30.

It belongs to the plant LTP family.

Its function is as follows. Plant non-specific lipid-transfer proteins transfer phospholipids as well as galactolipids across membranes. May play a role in wax or cutin deposition in the cell walls of expanding epidermal cells and certain secretory tissues. The chain is Non-specific lipid-transfer protein from Triticum aestivum (Wheat).